We begin with the raw amino-acid sequence, 54 residues long: Ovomucoid (54 aa).

Residues 4–54 (VDCSDYPKPACTVEYMPLCGSDNKTYGNKCNFCNAVVDSNGTLTLSHFGKC) enclose the Kazal-like domain. 3 cysteine pairs are disulfide-bonded: Cys-6–Cys-36, Cys-14–Cys-33, and Cys-22–Cys-54. Asn-43 carries an N-linked (GlcNAc...) asparagine glycan.

The protein localises to the secreted. The polypeptide is Ovomucoid (Anser canagicus (Emperor goose)).